An 833-amino-acid chain; its full sequence is Major vault protein (833 aa).

MVP repeat units lie at residues 54-118, 119-170, 171-223, 224-278, 280-328, 329-380, and 381-433; these read RHYC…QLIP, PNTG…TVIY, PNTA…TMLS, DLKA…VSLS, KEYV…LVVG, KEEA…MALD, and KNEG…SIQT.

As to quaternary structure, the vault ribonucleoprotein particle is a huge (400 A x 670 A) cage structure of 12.9 MDa. It consists of a dimer of half-vaults, with each half-vault comprising 39 identical major vault protein (MVP) chains, PARP4 and one or more vault RNAs (vRNAs).

The protein resides in the cytoplasm. The protein localises to the nucleus. Required for normal vault structure. Vaults are multi-subunit structures that may act as scaffolds for proteins involved in signal transduction. Vaults may also play a role in nucleo-cytoplasmic transport. The chain is Major vault protein from Leishmania infantum.